We begin with the raw amino-acid sequence, 234 residues long: Peroxiredoxin-2E, chloroplastic (234 aa).

A chloroplast-targeting transit peptide spans 1 to 70 (MATSLSVSRF…TRSFATTPVT (70 aa)). A Thioredoxin domain is found at 73–234 (ISVGDKLPDS…SSAEDMLKAL (162 aa)). Ser-82 carries the post-translational modification Phosphoserine. The Cysteine sulfenic acid (-SOH) intermediate role is filled by Cys-121.

This sequence belongs to the peroxiredoxin family. Prx5 subfamily. In terms of assembly, monomer. In terms of tissue distribution, expressed in all tissues but predominantly in buds, siliques and seeds.

It is found in the plastid. Its subcellular location is the chloroplast stroma. The catalysed reaction is [glutaredoxin]-dithiol + a hydroperoxide = [glutaredoxin]-disulfide + an alcohol + H2O. In terms of biological role, thiol-specific peroxidase that catalyzes the reduction of hydrogen peroxide and organic hydroperoxides to water and alcohols, respectively. Plays a role in cell protection against oxidative stress by detoxifying peroxides. May be involved in chloroplast redox homeostasis. This chain is Peroxiredoxin-2E, chloroplastic (PRXIIE), found in Arabidopsis thaliana (Mouse-ear cress).